A 318-amino-acid polypeptide reads, in one-letter code: Oxygen-evolving enhancer protein 1, chloroplastic (318 aa).

The N-terminal stretch at 1 to 18 is a signal peptide; that stretch reads MKAVIAVFITLMLTAVVA. The chain crosses the membrane as a helical span at residues 45–65; the sequence is AAAAALAALTTLSVISPSFAI.

Belongs to the PsbO family.

It is found in the plastid. The protein localises to the chloroplast thylakoid membrane. Functionally, stabilizes the manganese cluster which is the primary site of water splitting. This chain is Oxygen-evolving enhancer protein 1, chloroplastic, found in Chattonella marina var. antiqua (Red tide flagellate).